The following is a 733-amino-acid chain: Oligopeptide transporter 8 (733 aa).

14 helical membrane passes run 42–62 (MWVL…FFWY), 66–86 (PLTI…HLMA), 115–135 (VLIT…HILS), 147–167 (FLPA…WAGL), 209–229 (FFVI…YLFT), 244–264 (SILV…SFGL), 281–301 (FFAS…ITPL), 357–377 (FAVT…HVLI), 413–433 (LWWF…ICIY), 442–462 (WWGA…VGVI), 531–551 (VGTL…MAEI), 596–616 (YSNI…VYLA), 644–664 (ASAV…HFVF), and 677–697 (VLSG…FLAL).

It belongs to the oligopeptide OPT transporter (TC 2.A.67.1) family.

The protein localises to the membrane. Functionally, may be involved in the translocation of tetra- and pentapeptides across the cellular membrane in an energy-dependent manner. This Arabidopsis thaliana (Mouse-ear cress) protein is Oligopeptide transporter 8 (OPT8).